We begin with the raw amino-acid sequence, 62 residues long: Cytotoxin 11 (62 aa).

Intrachain disulfides connect cysteine 3–cysteine 22, cysteine 15–cysteine 40, cysteine 44–cysteine 55, and cysteine 56–cysteine 61.

The protein belongs to the three-finger toxin family. Short-chain subfamily. Orphan group XV sub-subfamily. In terms of tissue distribution, expressed by the venom gland.

Its subcellular location is the secreted. It localises to the target cell membrane. Its function is as follows. Has low cytotoxic activity. In Naja annulifera (Banded Egyptian cobra), this protein is Cytotoxin 11.